Consider the following 341-residue polypeptide: tRNA N6-adenosine threonylcarbamoyltransferase (341 aa).

The Fe cation site is built by histidine 111 and histidine 115. Substrate is bound by residues 134-138 (LVSGG), aspartate 167, glycine 180, and asparagine 276. Position 304 (aspartate 304) interacts with Fe cation.

The protein belongs to the KAE1 / TsaD family. Requires Fe(2+) as cofactor.

It localises to the cytoplasm. It catalyses the reaction L-threonylcarbamoyladenylate + adenosine(37) in tRNA = N(6)-L-threonylcarbamoyladenosine(37) in tRNA + AMP + H(+). Required for the formation of a threonylcarbamoyl group on adenosine at position 37 (t(6)A37) in tRNAs that read codons beginning with adenine. Is involved in the transfer of the threonylcarbamoyl moiety of threonylcarbamoyl-AMP (TC-AMP) to the N6 group of A37, together with TsaE and TsaB. TsaD likely plays a direct catalytic role in this reaction. The chain is tRNA N6-adenosine threonylcarbamoyltransferase from Pseudomonas putida (strain ATCC 700007 / DSM 6899 / JCM 31910 / BCRC 17059 / LMG 24140 / F1).